Reading from the N-terminus, the 299-residue chain is Biotin synthase (299 aa).

Residues 22-252 (TSNLKLDLCS…NVTIKIAAGR (231 aa)) enclose the Radical SAM core domain. The [4Fe-4S] cluster site is built by C40, C44, and C47. Residues C116, C176, and K247 each contribute to the [2Fe-2S] cluster site.

The protein belongs to the radical SAM superfamily. Biotin synthase family. Homodimer. [4Fe-4S] cluster serves as cofactor. The cofactor is [2Fe-2S] cluster.

The catalysed reaction is (4R,5S)-dethiobiotin + (sulfur carrier)-SH + 2 reduced [2Fe-2S]-[ferredoxin] + 2 S-adenosyl-L-methionine = (sulfur carrier)-H + biotin + 2 5'-deoxyadenosine + 2 L-methionine + 2 oxidized [2Fe-2S]-[ferredoxin]. It functions in the pathway cofactor biosynthesis; biotin biosynthesis; biotin from 7,8-diaminononanoate: step 2/2. Its function is as follows. Catalyzes the conversion of dethiobiotin (DTB) to biotin by the insertion of a sulfur atom into dethiobiotin via a radical-based mechanism. This is Biotin synthase from Thermotoga petrophila (strain ATCC BAA-488 / DSM 13995 / JCM 10881 / RKU-1).